The chain runs to 82 residues: Small ribosomal subunit protein bS16 (82 aa).

Belongs to the bacterial ribosomal protein bS16 family.

This is Small ribosomal subunit protein bS16 from Proteus mirabilis (strain HI4320).